The sequence spans 264 residues: Thymidylate synthase (264 aa).

R21 is a binding site for dUMP. (6R)-5,10-methylene-5,6,7,8-tetrahydrofolate is bound at residue H51. Position 126 to 127 (126 to 127 (RR)) interacts with dUMP. C146 serves as the catalytic Nucleophile. DUMP contacts are provided by residues 166-169 (RSCD), N177, and 207-209 (HLY). D169 serves as a coordination point for (6R)-5,10-methylene-5,6,7,8-tetrahydrofolate. A263 is a binding site for (6R)-5,10-methylene-5,6,7,8-tetrahydrofolate.

Belongs to the thymidylate synthase family. Bacterial-type ThyA subfamily. Homodimer.

Its subcellular location is the cytoplasm. The catalysed reaction is dUMP + (6R)-5,10-methylene-5,6,7,8-tetrahydrofolate = 7,8-dihydrofolate + dTMP. It functions in the pathway pyrimidine metabolism; dTTP biosynthesis. Functionally, catalyzes the reductive methylation of 2'-deoxyuridine-5'-monophosphate (dUMP) to 2'-deoxythymidine-5'-monophosphate (dTMP) while utilizing 5,10-methylenetetrahydrofolate (mTHF) as the methyl donor and reductant in the reaction, yielding dihydrofolate (DHF) as a by-product. This enzymatic reaction provides an intracellular de novo source of dTMP, an essential precursor for DNA biosynthesis. The polypeptide is Thymidylate synthase (Escherichia coli O9:H4 (strain HS)).